A 198-amino-acid chain; its full sequence is Nucleoside triphosphate pyrophosphatase (198 aa).

The active-site Proton acceptor is the Asp72.

The protein belongs to the Maf family. A divalent metal cation is required as a cofactor.

It localises to the cytoplasm. It catalyses the reaction a ribonucleoside 5'-triphosphate + H2O = a ribonucleoside 5'-phosphate + diphosphate + H(+). The catalysed reaction is a 2'-deoxyribonucleoside 5'-triphosphate + H2O = a 2'-deoxyribonucleoside 5'-phosphate + diphosphate + H(+). Functionally, nucleoside triphosphate pyrophosphatase. May have a dual role in cell division arrest and in preventing the incorporation of modified nucleotides into cellular nucleic acids. In Corynebacterium aurimucosum (strain ATCC 700975 / DSM 44827 / CIP 107346 / CN-1) (Corynebacterium nigricans), this protein is Nucleoside triphosphate pyrophosphatase.